A 372-amino-acid chain; its full sequence is Chaperone protein DnaJ (372 aa).

In terms of domain architecture, J spans 5–70 (DYYDVLGVER…QKRANYDQYG (66 aa)). Residues 130 to 208 (GTTKDIQINT…CHGDGRVHKK (79 aa)) form a CR-type zinc finger. Zn(2+)-binding residues include C143, C146, C160, C163, C182, C185, C196, and C199. CXXCXGXG motif repeat units follow at residues 143-150 (CDSCDGSG), 160-167 (CSTCHGAG), 182-189 (CPSCHGSG), and 196-203 (CKSCHGDG).

It belongs to the DnaJ family. As to quaternary structure, homodimer. Requires Zn(2+) as cofactor.

It localises to the cytoplasm. Participates actively in the response to hyperosmotic and heat shock by preventing the aggregation of stress-denatured proteins and by disaggregating proteins, also in an autonomous, DnaK-independent fashion. Unfolded proteins bind initially to DnaJ; upon interaction with the DnaJ-bound protein, DnaK hydrolyzes its bound ATP, resulting in the formation of a stable complex. GrpE releases ADP from DnaK; ATP binding to DnaK triggers the release of the substrate protein, thus completing the reaction cycle. Several rounds of ATP-dependent interactions between DnaJ, DnaK and GrpE are required for fully efficient folding. Also involved, together with DnaK and GrpE, in the DNA replication of plasmids through activation of initiation proteins. This Pasteurella multocida (strain Pm70) protein is Chaperone protein DnaJ.